Consider the following 103-residue polypeptide: Large ribosomal subunit protein uL24 (103 aa).

Belongs to the universal ribosomal protein uL24 family. In terms of assembly, part of the 50S ribosomal subunit.

Its function is as follows. One of two assembly initiator proteins, it binds directly to the 5'-end of the 23S rRNA, where it nucleates assembly of the 50S subunit. One of the proteins that surrounds the polypeptide exit tunnel on the outside of the subunit. This is Large ribosomal subunit protein uL24 from Treponema pallidum (strain Nichols).